The sequence spans 465 residues: GTPase Der (465 aa).

EngA-type G domains are found at residues 3-167 (PLVA…PEEG) and 179-352 (VRIA…ASAT). Residues 9 to 16 (GRPNVGKS), 57 to 61 (DTGGI), 119 to 122 (NKID), 185 to 192 (GRPNVGKS), 232 to 236 (DTAGL), and 297 to 300 (NKWD) each bind GTP. Positions 353–437 (HEFSTSEVNQ…PVRFIFREGA (85 aa)) constitute a KH-like domain.

Belongs to the TRAFAC class TrmE-Era-EngA-EngB-Septin-like GTPase superfamily. EngA (Der) GTPase family. As to quaternary structure, associates with the 50S ribosomal subunit.

GTPase that plays an essential role in the late steps of ribosome biogenesis. The protein is GTPase Der of Xanthomonas axonopodis pv. citri (strain 306).